A 176-amino-acid chain; its full sequence is Small ribosomal subunit protein uS5 (176 aa).

Positions 18–81 (FEEKMLFVNR…SIARKNMISV (64 aa)) constitute an S5 DRBM domain.

Belongs to the universal ribosomal protein uS5 family. As to quaternary structure, part of the 30S ribosomal subunit. Contacts proteins S4 and S8.

Functionally, with S4 and S12 plays an important role in translational accuracy. In terms of biological role, located at the back of the 30S subunit body where it stabilizes the conformation of the head with respect to the body. This Deinococcus deserti (strain DSM 17065 / CIP 109153 / LMG 22923 / VCD115) protein is Small ribosomal subunit protein uS5.